The primary structure comprises 488 residues: Spermatogenesis-associated protein 6 (488 aa).

A signal peptide spans 1–17; sequence MPKVKALQCALALEIRS. A disordered region spans residues 176 to 225; the sequence is HGRLQCRTSRSQKKKSKSPERSKYCINTKNYEQPTISSKSHSPSPYTKRR. Residues 200 to 220 show a composition bias toward polar residues; sequence CINTKNYEQPTISSKSHSPSP. A phosphoserine mark is found at serine 217 and serine 219. Residue lysine 248 forms a Glycyl lysine isopeptide (Lys-Gly) (interchain with G-Cter in SUMO2) linkage. 9 positions are modified to phosphoserine: serine 265, serine 274, serine 325, serine 343, serine 346, serine 354, serine 424, serine 465, and serine 487.

This sequence belongs to the SPATA6 family. Interacts with MYL6. As to expression, specifically expressed in developing spermatids and mature spermatozoa (at protein level). Isoform 1 is weakly expressed in testis, ovary, thymus and placenta. Isoform 2 and isoform 3 are testis-specific. Expression isw higher in spermatids than in spermatocytes and spermatogonia.

Its subcellular location is the secreted. It is found in the cell projection. The protein resides in the cilium. The protein localises to the flagellum. In terms of biological role, required for formation of the sperm connecting piece during spermiogenesis. Sperm connecting piece is essential for linking the developing flagellum to the head during late spermiogenesis. May be involved in myosin-based microfilament transport through interaction with myosin subunits. The protein is Spermatogenesis-associated protein 6 of Mus musculus (Mouse).